The primary structure comprises 334 residues: Serine/threonine-protein kinase SAPK3 (334 aa).

The Protein kinase domain occupies 5–261; it reads YEALKELGAG…IPEIKKHTWF (257 aa). ATP-binding positions include 11 to 19 and Lys-34; that span reads LGAGNFGVA. The active-site Proton acceptor is Asp-124.

It belongs to the protein kinase superfamily. Ser/Thr protein kinase family. Post-translationally, autophosphorylated in presence of Ca(2+). As to expression, expressed in leaves and maturing seeds, but not in roots and stems of field-grown plants.

It localises to the cytoplasm. It is found in the nucleus. It carries out the reaction L-seryl-[protein] + ATP = O-phospho-L-seryl-[protein] + ADP + H(+). The catalysed reaction is L-threonyl-[protein] + ATP = O-phospho-L-threonyl-[protein] + ADP + H(+). Activated by phosphorylation. Functionally, may play a role in signal transduction of hyperosmotic response. The protein is Serine/threonine-protein kinase SAPK3 (SAPK3) of Oryza sativa subsp. indica (Rice).